We begin with the raw amino-acid sequence, 193 residues long: Thymidine kinase (193 aa).

ATP contacts are provided by residues 9-16 (STMNAGKS) and 87-90 (DEAQ). Glu88 acts as the Proton acceptor in catalysis. Residues Cys145, Cys147, Cys182, and His185 each coordinate Zn(2+).

This sequence belongs to the thymidine kinase family. In terms of assembly, homotetramer.

It is found in the cytoplasm. It catalyses the reaction thymidine + ATP = dTMP + ADP + H(+). The protein is Thymidine kinase of Haemophilus influenzae (strain 86-028NP).